The chain runs to 671 residues: MESIEQQLTELRTTLRHHEYLYHVMDAPEIPDAEYDRLMRELRELETKHPELITPDSPTQRVGAAPLAAFSQIRHEVPMLSLDNVFDEESFLAFNKRVQDRLKSNEKVTWCCELKLDGLAVSILYENGVLVSAATRGDGTTGEDITSNVRTIRAIPLKLHGENIPARLEVRGEVFLPQAGFEKINEDARRTGGKVFANPRNAAAGSLRQLDPRITAKRPLTFFCYGVGVLEGGELPDTHLGRLLQFKKWGLPVSDRVTLCESAEEVLAFYHKVEEDRPTLGFDIDGVVIKVNSLEQQEQLGFVARAPRWAVAFKFPAQEQMTFVRDVEFQVGRTGAITPVARLEPVHVAGVLVSNATLHNADEIERLGLRIGDKVVIRRAGDVIPQVVNVVLSERPEDTREVVFPTYCPVCGSDVERVEGEAVARCTGGLICGAQRKESLKHFVSRRAMDVDGMGDKIIDQLVEKEYVHTPADLFKLTAGKLTGLERMGPKSAQNVVNALEKAKETTFARFLYALGIREVGEATAAGLAAYFGTLEALEAASIEELQKVPDVGIVVASHVHNFFAEESNRNVISELLAEGVHWPAPIVINAEEIDSPFAGKTVVLTGSLSQMSRDDAKARLVELGAKVAGSVSKKTDLVIAGEAAGSKLAKAQELGIEVIDEAEMLRLLGS.

NAD(+)-binding positions include 32–36, 81–82, and Glu-113; these read DAEYD and SL. The N6-AMP-lysine intermediate role is filled by Lys-115. NAD(+)-binding residues include Arg-136, Glu-173, Lys-290, and Lys-314. 4 residues coordinate Zn(2+): Cys-408, Cys-411, Cys-426, and Cys-432. Residues 593 to 671 enclose the BRCT domain; that stretch reads EIDSPFAGKT…EAEMLRLLGS (79 aa).

The protein belongs to the NAD-dependent DNA ligase family. LigA subfamily. Requires Mg(2+) as cofactor. It depends on Mn(2+) as a cofactor.

It carries out the reaction NAD(+) + (deoxyribonucleotide)n-3'-hydroxyl + 5'-phospho-(deoxyribonucleotide)m = (deoxyribonucleotide)n+m + AMP + beta-nicotinamide D-nucleotide.. DNA ligase that catalyzes the formation of phosphodiester linkages between 5'-phosphoryl and 3'-hydroxyl groups in double-stranded DNA using NAD as a coenzyme and as the energy source for the reaction. It is essential for DNA replication and repair of damaged DNA. This chain is DNA ligase, found in Escherichia coli O157:H7.